The sequence spans 155 residues: Transcriptional repressor NrdR (155 aa).

Over residues 1-10 the composition is skewed to basic residues; the sequence is MQCPHCHHNS. The segment at 1-21 is disordered; sequence MQCPHCHHNSSRVVDSRPTDG. A zinc finger spans residues 3-34; sequence CPHCHHNSSRVVDSRPTDGGRAIRRRRECENC. The region spanning 49-139 is the ATP-cone domain; sequence LLVIKKNGTR…VYRQFKDMSV (91 aa).

It belongs to the NrdR family. The cofactor is Zn(2+).

In terms of biological role, negatively regulates transcription of bacterial ribonucleotide reductase nrd genes and operons by binding to NrdR-boxes. The protein is Transcriptional repressor NrdR of Lacticaseibacillus casei (strain BL23) (Lactobacillus casei).